Reading from the N-terminus, the 117-residue chain is MNKNLARLRRARKTRARIASQAKPRLCVFRSGRHIYAQVIDDSQGKVLAQASTVEGELRASMGRGADVAAAATIGQRVAAKALAVGVKEVAFDRSGYRYHGRVRALADAAREGGLSF.

It belongs to the universal ribosomal protein uL18 family. As to quaternary structure, part of the 50S ribosomal subunit; part of the 5S rRNA/L5/L18/L25 subcomplex. Contacts the 5S and 23S rRNAs.

Functionally, this is one of the proteins that bind and probably mediate the attachment of the 5S RNA into the large ribosomal subunit, where it forms part of the central protuberance. The chain is Large ribosomal subunit protein uL18 from Acidithiobacillus ferrooxidans (strain ATCC 23270 / DSM 14882 / CIP 104768 / NCIMB 8455) (Ferrobacillus ferrooxidans (strain ATCC 23270)).